A 255-amino-acid polypeptide reads, in one-letter code: uncharacterized protein (255 aa).

The signal sequence occupies residues 1–22 (MNILSPIIIIIILIVLFYVMRM).

This is an uncharacterized protein from Acanthamoeba polyphaga (Amoeba).